The chain runs to 294 residues: Eukaryotic translation initiation factor 3 subunit G (294 aa).

Positions 1 to 22 (MQTFHHQDTGSEDFRQNTMDEK) are enriched in basic and acidic residues. Disordered regions lie at residues 1–42 (MQTF…DGTK) and 164–211 (GGMG…SDDD). Residues 30-42 (STPQITQNADGTK) show a composition bias toward polar residues. Residues 193–205 (GPGGPGGPGGAAG) show a composition bias toward gly residues. The RRM domain occupies 214-292 (LTLRVTNLSE…LIMKVDYSKK (79 aa)).

It belongs to the eIF-3 subunit G family. In terms of assembly, component of the eukaryotic translation initiation factor 3 (eIF-3) complex.

The protein localises to the cytoplasm. Its function is as follows. RNA-binding component of the eukaryotic translation initiation factor 3 (eIF-3) complex, which is involved in protein synthesis of a specialized repertoire of mRNAs and, together with other initiation factors, stimulates binding of mRNA and methionyl-tRNAi to the 40S ribosome. The eIF-3 complex specifically targets and initiates translation of a subset of mRNAs involved in cell proliferation. This subunit can bind 18S rRNA. This Yarrowia lipolytica (strain CLIB 122 / E 150) (Yeast) protein is Eukaryotic translation initiation factor 3 subunit G.